The following is a 243-amino-acid chain: Benzil reductase ((S)-benzoin forming) (243 aa).

NADP(+) contacts are provided by Ile6, Asn80, Tyr147, Lys151, and Thr184. Tyr147 functions as the Proton acceptor in the catalytic mechanism.

Belongs to the short-chain dehydrogenases/reductases (SDR) family.

The protein localises to the cytoplasm. The catalysed reaction is (S)-benzoin + NADP(+) = benzil + NADPH + H(+). Reduces benzil stereospecifically to (S)-benzoin. This Bacillus subtilis (strain 168) protein is Benzil reductase ((S)-benzoin forming) (yueD).